The sequence spans 291 residues: Quinol oxidase subunit 2 (291 aa).

A signal peptide spans 1–28 (MQLKKAFWKLASLLPLSLLLFLGGCDKK). The next 2 helical transmembrane spans lie at 49–69 (SFLL…VILI) and 91–111 (LEII…IPTV).

It belongs to the cytochrome c oxidase subunit 2 family.

The protein localises to the cell membrane. It carries out the reaction 2 a quinol + O2 = 2 a quinone + 2 H2O. In terms of biological role, catalyzes quinol oxidation with the concomitant reduction of oxygen to water. Subunit II transfers the electrons from a quinol to the binuclear center of the catalytic subunit I. The protein is Quinol oxidase subunit 2 of Bacillus anthracis.